Reading from the N-terminus, the 302-residue chain is Plant UBX domain-containing protein 3 (302 aa).

Disordered regions lie at residues 1–64 (MSSK…PKHD) and 79–98 (VEGP…TGRL). The region spanning 113–177 (PVIHNIIFWS…NLMRRDEKCP (65 aa)) is the SEP domain. One can recognise a UBX domain in the interval 224-301 (ETLPSTSIQL…GLASSVVIQK (78 aa)).

Interacts with CDC48A.

The polypeptide is Plant UBX domain-containing protein 3 (Arabidopsis thaliana (Mouse-ear cress)).